A 363-amino-acid polypeptide reads, in one-letter code: Cytochrome b (363 aa).

The next 4 helical transmembrane spans lie at 23–43, 67–89, 102–122, and 164–184; these read FGFI…MLSF, WFVR…LHIM, SWYS…VGYV, and FFSI…FHLY. Residues His-73 and His-87 each coordinate heme b. Residues His-168 and His-182 each contribute to the heme b site. Residue His-187 coordinates a ubiquinone. Transmembrane regions (helical) follow at residues 210 to 230, 271 to 291, 310 to 330, and 332 to 352; these read VLFS…VQSG, VFPT…LLVL, VWTT…SIGK, and VVHV…VLFI.

Belongs to the cytochrome b family. In terms of assembly, the main subunits of complex b-c1 are: cytochrome b, cytochrome c1 and the Rieske protein. Heme b serves as cofactor.

The protein localises to the mitochondrion inner membrane. In terms of biological role, component of the ubiquinol-cytochrome c reductase complex (complex III or cytochrome b-c1 complex) that is part of the mitochondrial respiratory chain. The b-c1 complex mediates electron transfer from ubiquinol to cytochrome c. Contributes to the generation of a proton gradient across the mitochondrial membrane that is then used for ATP synthesis. This is Cytochrome b (MT-CYB) from Theileria annulata.